An 804-amino-acid chain; its full sequence is Phenylalanine--tRNA ligase beta subunit (804 aa).

Residues 39–147 (GEGLDSVVTA…PDCEPGQPVF (109 aa)) form the tRNA-binding domain. Residues 401-480 (LAERKVTLAV…RLNGYDNIPV (80 aa)) form the B5 domain. Mg(2+) is bound by residues Asp458, Asp464, Glu467, and Glu468. In terms of domain architecture, FDX-ACB spans 711–804 (SRFPQVARDS…LIAKLGAEIR (94 aa)).

This sequence belongs to the phenylalanyl-tRNA synthetase beta subunit family. Type 1 subfamily. Tetramer of two alpha and two beta subunits. Requires Mg(2+) as cofactor.

It is found in the cytoplasm. It carries out the reaction tRNA(Phe) + L-phenylalanine + ATP = L-phenylalanyl-tRNA(Phe) + AMP + diphosphate + H(+). The protein is Phenylalanine--tRNA ligase beta subunit of Syntrophotalea carbinolica (strain DSM 2380 / NBRC 103641 / GraBd1) (Pelobacter carbinolicus).